Reading from the N-terminus, the 427-residue chain is 3-phosphoshikimate 1-carboxyvinyltransferase (427 aa).

3-phosphoshikimate contacts are provided by Lys-20, Ser-21, and Arg-25. Lys-20 serves as a coordination point for phosphoenolpyruvate. The phosphoenolpyruvate site is built by Gly-92 and Arg-120. The 3-phosphoshikimate site is built by Ser-166, Gln-168, Asp-312, and Lys-339. Gln-168 is a binding site for phosphoenolpyruvate. Asp-312 functions as the Proton acceptor in the catalytic mechanism. Residues Arg-343 and Arg-385 each coordinate phosphoenolpyruvate.

This sequence belongs to the EPSP synthase family. In terms of assembly, monomer.

It localises to the cytoplasm. It catalyses the reaction 3-phosphoshikimate + phosphoenolpyruvate = 5-O-(1-carboxyvinyl)-3-phosphoshikimate + phosphate. Its pathway is metabolic intermediate biosynthesis; chorismate biosynthesis; chorismate from D-erythrose 4-phosphate and phosphoenolpyruvate: step 6/7. Its function is as follows. Catalyzes the transfer of the enolpyruvyl moiety of phosphoenolpyruvate (PEP) to the 5-hydroxyl of shikimate-3-phosphate (S3P) to produce enolpyruvyl shikimate-3-phosphate and inorganic phosphate. The protein is 3-phosphoshikimate 1-carboxyvinyltransferase of Streptococcus pyogenes serotype M28 (strain MGAS6180).